The primary structure comprises 860 residues: DNA mismatch repair protein MutS (860 aa).

Position 607 to 614 (607 to 614 (GPNMSGKS)) interacts with ATP.

The protein belongs to the DNA mismatch repair MutS family.

In terms of biological role, this protein is involved in the repair of mismatches in DNA. It is possible that it carries out the mismatch recognition step. This protein has a weak ATPase activity. The protein is DNA mismatch repair protein MutS of Listeria welshimeri serovar 6b (strain ATCC 35897 / DSM 20650 / CCUG 15529 / CIP 8149 / NCTC 11857 / SLCC 5334 / V8).